The primary structure comprises 602 residues: Glutamine--fructose-6-phosphate aminotransferase [isomerizing] (602 aa).

The Nucleophile; for GATase activity role is filled by Cys2. Residues 2–217 (CGIVGVVGNT…DQELVIVKAD (216 aa)) form the Glutamine amidotransferase type-2 domain. The tract at residues 67–87 (IGHTRWATHGKPTEDNAHPHR) is disordered. The segment covering 77 to 87 (KPTEDNAHPHR) has biased composition (basic and acidic residues). 2 SIS domains span residues 283 to 422 (IIKA…ANGN) and 455 to 592 (VREL…VDKP). Residue Lys597 is the For Fru-6P isomerization activity of the active site.

In terms of assembly, homodimer.

It is found in the cytoplasm. The catalysed reaction is D-fructose 6-phosphate + L-glutamine = D-glucosamine 6-phosphate + L-glutamate. Functionally, catalyzes the first step in hexosamine metabolism, converting fructose-6P into glucosamine-6P using glutamine as a nitrogen source. The polypeptide is Glutamine--fructose-6-phosphate aminotransferase [isomerizing] (Streptococcus pneumoniae serotype 4 (strain ATCC BAA-334 / TIGR4)).